A 222-amino-acid polypeptide reads, in one-letter code: Putative N-acetylmannosamine-6-phosphate 2-epimerase (222 aa).

It belongs to the NanE family.

It carries out the reaction an N-acyl-D-glucosamine 6-phosphate = an N-acyl-D-mannosamine 6-phosphate. It participates in amino-sugar metabolism; N-acetylneuraminate degradation; D-fructose 6-phosphate from N-acetylneuraminate: step 3/5. In terms of biological role, converts N-acetylmannosamine-6-phosphate (ManNAc-6-P) to N-acetylglucosamine-6-phosphate (GlcNAc-6-P). In Staphylococcus aureus (strain bovine RF122 / ET3-1), this protein is Putative N-acetylmannosamine-6-phosphate 2-epimerase.